A 106-amino-acid polypeptide reads, in one-letter code: Iron-sulfur cluster assembly protein CyaY (106 aa).

It belongs to the frataxin family.

Functionally, involved in iron-sulfur (Fe-S) cluster assembly. May act as a regulator of Fe-S biogenesis. This chain is Iron-sulfur cluster assembly protein CyaY, found in Salmonella dublin (strain CT_02021853).